A 152-amino-acid polypeptide reads, in one-letter code: UPF0756 membrane protein JDM1_1594 (152 aa).

Helical transmembrane passes span 25–45 (ATVV…LTTI), 52–72 (WGVT…QIGF), 85–105 (WIAV…VGLL), and 115–135 (LVFG…GPII).

It belongs to the UPF0756 family.

The protein localises to the cell membrane. In Lactiplantibacillus plantarum (strain JDM1) (Lactobacillus plantarum), this protein is UPF0756 membrane protein JDM1_1594.